The following is a 296-amino-acid chain: Large ribosomal subunit protein uL18B (296 aa).

The interval 251–296 is disordered; that stretch reads PVHEKKPKKEVKKKRWNRAKLSLEQKKDRVAQKKASFLRAQEKADS. Basic residues predominate over residues 255–268; that stretch reads KKPKKEVKKKRWNR. The span at 271 to 281 shows a compositional bias: basic and acidic residues; sequence LSLEQKKDRVA.

It belongs to the universal ribosomal protein uL18 family. In terms of assembly, component of the large ribosomal subunit (LSU). Part of a LSU subcomplex, the 5S RNP which is composed of the 5S RNA, RPL5 and RPL11.

It localises to the cytoplasm. It is found in the nucleus. The protein localises to the nucleolus. Component of the ribosome, a large ribonucleoprotein complex responsible for the synthesis of proteins in the cell. The small ribosomal subunit (SSU) binds messenger RNAs (mRNAs) and translates the encoded message by selecting cognate aminoacyl-transfer RNA (tRNA) molecules. The large subunit (LSU) contains the ribosomal catalytic site termed the peptidyl transferase center (PTC), which catalyzes the formation of peptide bonds, thereby polymerizing the amino acids delivered by tRNAs into a polypeptide chain. The nascent polypeptides leave the ribosome through a tunnel in the LSU and interact with protein factors that function in enzymatic processing, targeting, and the membrane insertion of nascent chains at the exit of the ribosomal tunnel. As part of the 5S RNP/5S ribonucleoprotein particle it is an essential component of the LSU, required for its formation and the maturation of rRNAs. It also couples ribosome biogenesis to p53/TP53 activation. As part of the 5S RNP it accumulates in the nucleoplasm and inhibits MDM2, when ribosome biogenesis is perturbed, mediating the stabilization and the activation of TP53. This is Large ribosomal subunit protein uL18B (rpl5-b) from Xenopus laevis (African clawed frog).